The following is a 327-amino-acid chain: Phenylalanine--tRNA ligase alpha subunit (327 aa).

Residue E252 participates in Mg(2+) binding.

This sequence belongs to the class-II aminoacyl-tRNA synthetase family. Phe-tRNA synthetase alpha subunit type 1 subfamily. As to quaternary structure, tetramer of two alpha and two beta subunits. Mg(2+) is required as a cofactor.

The protein resides in the cytoplasm. It carries out the reaction tRNA(Phe) + L-phenylalanine + ATP = L-phenylalanyl-tRNA(Phe) + AMP + diphosphate + H(+). The protein is Phenylalanine--tRNA ligase alpha subunit of Shewanella baltica (strain OS185).